A 175-amino-acid chain; its full sequence is Nucleoside diphosphate kinase 6 (175 aa).

6 residues coordinate ATP: K8, F57, R85, T91, R105, and N115. H118 serves as the catalytic Pros-phosphohistidine intermediate.

Belongs to the NDK family. It depends on Mg(2+) as a cofactor.

It catalyses the reaction a 2'-deoxyribonucleoside 5'-diphosphate + ATP = a 2'-deoxyribonucleoside 5'-triphosphate + ADP. The enzyme catalyses a ribonucleoside 5'-diphosphate + ATP = a ribonucleoside 5'-triphosphate + ADP. Functionally, major role in the synthesis of nucleoside triphosphates other than ATP. The ATP gamma phosphate is transferred to the NDP beta phosphate via a ping-pong mechanism, using a phosphorylated active-site intermediate. The sequence is that of Nucleoside diphosphate kinase 6 (Nme6) from Rattus norvegicus (Rat).